Here is a 264-residue protein sequence, read N- to C-terminus: Glutamate racemase (264 aa).

Substrate contacts are provided by residues 10–11 (DS) and 42–43 (YG). Cys73 acts as the Proton donor/acceptor in catalysis. Position 74–75 (74–75 (NT)) interacts with substrate. Catalysis depends on Cys183, which acts as the Proton donor/acceptor. A substrate-binding site is contributed by 184–185 (TH).

It belongs to the aspartate/glutamate racemases family. In terms of assembly, homodimer.

It carries out the reaction L-glutamate = D-glutamate. It functions in the pathway cell wall biogenesis; peptidoglycan biosynthesis. Provides the (R)-glutamate required for cell wall biosynthesis. In Streptococcus pyogenes serotype M1, this protein is Glutamate racemase.